A 186-amino-acid chain; its full sequence is Elongation factor P (186 aa).

N-alpha-linked (Rha) arginine glycosylation is present at Arg32.

It belongs to the elongation factor P family. Glycosylated ar Arg-32 by EarP: arginine rhamnosylation is required for EF-P function and rescue of polyproline stalled ribosomes.

The protein localises to the cytoplasm. Its pathway is protein biosynthesis; polypeptide chain elongation. Functionally, involved in peptide bond synthesis. Stimulates efficient translation and peptide-bond synthesis on native or reconstituted 70S ribosomes in vitro. Probably functions indirectly by altering the affinity of the ribosome for aminoacyl-tRNA, thus increasing their reactivity as acceptors for peptidyl transferase. This Shewanella oneidensis (strain ATCC 700550 / JCM 31522 / CIP 106686 / LMG 19005 / NCIMB 14063 / MR-1) protein is Elongation factor P.